The chain runs to 424 residues: UPF0597 protein Ssed_2537 (424 aa).

Belongs to the UPF0597 family.

This is UPF0597 protein Ssed_2537 from Shewanella sediminis (strain HAW-EB3).